Consider the following 428-residue polypeptide: Elongation factor 1-alpha (428 aa).

The 211-residue stretch at 5-215 (KPHVNIVFIG…ALDQIPEPPK (211 aa)) folds into the tr-type G domain. A G1 region spans residues 14 to 21 (GHVDHGKS). Position 14–21 (14–21 (GHVDHGKS)) interacts with GTP. S21 provides a ligand contact to Mg(2+). The G2 stretch occupies residues 68–72 (GITID). The interval 89-92 (DAPG) is G3. GTP is bound by residues 89 to 93 (DAPGH) and 144 to 147 (NKMD). The segment at 144-147 (NKMD) is G4. The interval 181–183 (SAW) is G5.

The protein belongs to the TRAFAC class translation factor GTPase superfamily. Classic translation factor GTPase family. EF-Tu/EF-1A subfamily.

The protein localises to the cytoplasm. It carries out the reaction GTP + H2O = GDP + phosphate + H(+). Its function is as follows. GTP hydrolase that promotes the GTP-dependent binding of aminoacyl-tRNA to the A-site of ribosomes during protein biosynthesis. In Thermococcus gammatolerans (strain DSM 15229 / JCM 11827 / EJ3), this protein is Elongation factor 1-alpha.